Reading from the N-terminus, the 115-residue chain is Dolichyl-diphosphooligosaccharide--protein glycosyltransferase subunit DAD2 (115 aa).

Topologically, residues 1 to 31 are cytoplasmic; the sequence is MVKSTSKDAQDLFHSLHSAYTATPTNLKIID. Residues 32-52 traverse the membrane as a helical segment; it reads LYVCFAVFTALIQVAYMALVG. Over 53-55 the chain is Lumenal; sequence SFP. A helical transmembrane segment spans residues 56–76; that stretch reads FNSFLSGVLSCIGTAVLAVCL. Residues 77–94 lie on the Cytoplasmic side of the membrane; the sequence is RIQVNKENKEFKDLAPER. The helical transmembrane segment at 95–115 threads the bilayer; that stretch reads AFADFVLCNLVLHLVIINFLG.

This sequence belongs to the DAD/OST2 family. In terms of assembly, component of the oligosaccharyltransferase (OST) complex.

It is found in the endoplasmic reticulum membrane. Its pathway is protein modification; protein glycosylation. Its function is as follows. Subunit of the oligosaccharyl transferase (OST) complex that catalyzes the initial transfer of a defined glycan (Glc(3)Man(9)GlcNAc(2) in eukaryotes) from the lipid carrier dolichol-pyrophosphate to an asparagine residue within an Asn-X-Ser/Thr consensus motif in nascent polypeptide chains, the first step in protein N-glycosylation. N-glycosylation occurs cotranslationally and the complex associates with the Sec61 complex at the channel-forming translocon complex that mediates protein translocation across the endoplasmic reticulum (ER). All subunits are required for a maximal enzyme activity. The sequence is that of Dolichyl-diphosphooligosaccharide--protein glycosyltransferase subunit DAD2 (DAD2) from Arabidopsis thaliana (Mouse-ear cress).